Reading from the N-terminus, the 588-residue chain is Phosphomethylpyrimidine synthase (588 aa).

Residues asparagine 212, methionine 241, tyrosine 270, histidine 306, 326-328 (SRG), 367-370 (DGLR), and glutamate 406 contribute to the substrate site. Residue histidine 410 participates in Zn(2+) binding. Tyrosine 433 provides a ligand contact to substrate. Residue histidine 474 participates in Zn(2+) binding. [4Fe-4S] cluster is bound by residues cysteine 554, cysteine 557, and cysteine 562.

This sequence belongs to the ThiC family. Homodimer. [4Fe-4S] cluster is required as a cofactor.

It catalyses the reaction 5-amino-1-(5-phospho-beta-D-ribosyl)imidazole + S-adenosyl-L-methionine = 4-amino-2-methyl-5-(phosphooxymethyl)pyrimidine + CO + 5'-deoxyadenosine + formate + L-methionine + 3 H(+). It participates in cofactor biosynthesis; thiamine diphosphate biosynthesis. Functionally, catalyzes the synthesis of the hydroxymethylpyrimidine phosphate (HMP-P) moiety of thiamine from aminoimidazole ribotide (AIR) in a radical S-adenosyl-L-methionine (SAM)-dependent reaction. This chain is Phosphomethylpyrimidine synthase, found in Bartonella quintana (strain Toulouse) (Rochalimaea quintana).